A 216-amino-acid polypeptide reads, in one-letter code: 3-isopropylmalate dehydratase small subunit (216 aa).

Belongs to the LeuD family. LeuD type 1 subfamily. As to quaternary structure, heterodimer of LeuC and LeuD.

It carries out the reaction (2R,3S)-3-isopropylmalate = (2S)-2-isopropylmalate. It functions in the pathway amino-acid biosynthesis; L-leucine biosynthesis; L-leucine from 3-methyl-2-oxobutanoate: step 2/4. Its function is as follows. Catalyzes the isomerization between 2-isopropylmalate and 3-isopropylmalate, via the formation of 2-isopropylmaleate. This chain is 3-isopropylmalate dehydratase small subunit, found in Psychrobacter arcticus (strain DSM 17307 / VKM B-2377 / 273-4).